The primary structure comprises 350 residues: Phosphate acyltransferase (350 aa).

Belongs to the PlsX family. In terms of assembly, homodimer. Probably interacts with PlsY.

The protein localises to the cytoplasm. The catalysed reaction is a fatty acyl-[ACP] + phosphate = an acyl phosphate + holo-[ACP]. The protein operates within lipid metabolism; phospholipid metabolism. Its function is as follows. Catalyzes the reversible formation of acyl-phosphate (acyl-PO(4)) from acyl-[acyl-carrier-protein] (acyl-ACP). This enzyme utilizes acyl-ACP as fatty acyl donor, but not acyl-CoA. This is Phosphate acyltransferase from Chelativorans sp. (strain BNC1).